Consider the following 117-residue polypeptide: Putative pterin-4-alpha-carbinolamine dehydratase (117 aa).

The protein belongs to the pterin-4-alpha-carbinolamine dehydratase family.

The catalysed reaction is (4aS,6R)-4a-hydroxy-L-erythro-5,6,7,8-tetrahydrobiopterin = (6R)-L-erythro-6,7-dihydrobiopterin + H2O. The sequence is that of Putative pterin-4-alpha-carbinolamine dehydratase from Azoarcus sp. (strain BH72).